Here is a 396-residue protein sequence, read N- to C-terminus: Elongation factor Tu (396 aa).

The region spanning 10–206 (KLHVNVGTIG…ALDTHIPNPE (197 aa)) is the tr-type G domain. The interval 19–26 (GHVDHGKT) is G1. A GTP-binding site is contributed by 19-26 (GHVDHGKT). Position 26 (Thr-26) interacts with Mg(2+). The segment at 60–64 (GITIS) is G2. The segment at 81 to 84 (DCPG) is G3. Residues 81 to 85 (DCPGH) and 136 to 139 (NKAD) each bind GTP. The G4 stretch occupies residues 136 to 139 (NKAD). The interval 174 to 176 (SAL) is G5.

This sequence belongs to the TRAFAC class translation factor GTPase superfamily. Classic translation factor GTPase family. EF-Tu/EF-1A subfamily. Monomer.

The protein resides in the cytoplasm. The enzyme catalyses GTP + H2O = GDP + phosphate + H(+). GTP hydrolase that promotes the GTP-dependent binding of aminoacyl-tRNA to the A-site of ribosomes during protein biosynthesis. The chain is Elongation factor Tu from Xylella fastidiosa (strain Temecula1 / ATCC 700964).